A 222-amino-acid polypeptide reads, in one-letter code: Coiled-coil domain-containing protein 43 homolog (222 aa).

Residues 80–111 adopt a coiled-coil conformation; the sequence is ETENKLKLTNLKLEQELKIKETTQSEINEEEK. Disordered stretches follow at residues 102 to 126 and 159 to 222; these read TQSE…EQKK and EDNK…KRRL. Composition is skewed to basic and acidic residues over residues 112-126 and 175-212; these read YENP…EQKK and RIAD…EEKK. A coiled-coil region spans residues 168 to 222; that stretch reads GENLNAKRIADEEKAKREKSKIEHQKKVQRDKEALEKQKRDEEKKKTVKKEKRRL. The segment covering 213–222 has biased composition (basic residues); the sequence is KTVKKEKRRL.

Belongs to the CCDC43 family.

The chain is Coiled-coil domain-containing protein 43 homolog from Dictyostelium discoideum (Social amoeba).